Reading from the N-terminus, the 304-residue chain is Glycine--tRNA ligase alpha subunit (304 aa).

Belongs to the class-II aminoacyl-tRNA synthetase family. In terms of assembly, tetramer of two alpha and two beta subunits.

The protein localises to the cytoplasm. The catalysed reaction is tRNA(Gly) + glycine + ATP = glycyl-tRNA(Gly) + AMP + diphosphate. This chain is Glycine--tRNA ligase alpha subunit, found in Pectobacterium atrosepticum (strain SCRI 1043 / ATCC BAA-672) (Erwinia carotovora subsp. atroseptica).